The primary structure comprises 306 residues: Glutaminase (306 aa).

Substrate-binding residues include Ser64, Asn115, Glu159, Asn166, Tyr190, Tyr242, and Val260.

The protein belongs to the glutaminase family. In terms of assembly, homotetramer.

The catalysed reaction is L-glutamine + H2O = L-glutamate + NH4(+). In Vibrio atlanticus (strain LGP32) (Vibrio splendidus (strain Mel32)), this protein is Glutaminase.